The sequence spans 131 residues: Aspartate 1-decarboxylase (131 aa).

Ser-25 acts as the Schiff-base intermediate with substrate; via pyruvic acid in catalysis. Ser-25 is subject to Pyruvic acid (Ser). Position 57 (Thr-57) interacts with substrate. Catalysis depends on Tyr-58, which acts as the Proton donor. 73-75 is a substrate binding site; sequence GAA.

Belongs to the PanD family. In terms of assembly, heterooctamer of four alpha and four beta subunits. Pyruvate is required as a cofactor. Is synthesized initially as an inactive proenzyme, which is activated by self-cleavage at a specific serine bond to produce a beta-subunit with a hydroxyl group at its C-terminus and an alpha-subunit with a pyruvoyl group at its N-terminus.

The protein resides in the cytoplasm. It catalyses the reaction L-aspartate + H(+) = beta-alanine + CO2. It functions in the pathway cofactor biosynthesis; (R)-pantothenate biosynthesis; beta-alanine from L-aspartate: step 1/1. Functionally, catalyzes the pyruvoyl-dependent decarboxylation of aspartate to produce beta-alanine. This Anaeromyxobacter dehalogenans (strain 2CP-C) protein is Aspartate 1-decarboxylase.